A 277-amino-acid chain; its full sequence is uncharacterized protein (277 aa).

Positions 232-262 (NNESAICESQASSKEDERSDKTTSSSKKKSF) are disordered. Polar residues predominate over residues 234 to 243 (ESAICESQAS).

The protein localises to the cytoplasm. It localises to the nucleus. This is an uncharacterized protein from Schizosaccharomyces pombe (strain 972 / ATCC 24843) (Fission yeast).